Consider the following 313-residue polypeptide: Probable alpha-L-glutamate ligase (313 aa).

The ATP-grasp domain occupies 112-294 (LQMLMAQGIA…IALQMIVHLE (183 aa)). Residues Lys-148, 185–186 (EF), Asp-194, and 218–220 (RAN) each bind ATP. Residues Asp-255, Glu-267, and Asn-269 each coordinate Mg(2+). Mn(2+) is bound by residues Asp-255, Glu-267, and Asn-269.

The protein belongs to the RimK family. Mg(2+) is required as a cofactor. Requires Mn(2+) as cofactor.

The polypeptide is Probable alpha-L-glutamate ligase (Pasteurella multocida (strain Pm70)).